Reading from the N-terminus, the 571-residue chain is Proline--tRNA ligase (571 aa).

The protein belongs to the class-II aminoacyl-tRNA synthetase family. ProS type 1 subfamily. In terms of assembly, homodimer.

The protein localises to the cytoplasm. It carries out the reaction tRNA(Pro) + L-proline + ATP = L-prolyl-tRNA(Pro) + AMP + diphosphate. In terms of biological role, catalyzes the attachment of proline to tRNA(Pro) in a two-step reaction: proline is first activated by ATP to form Pro-AMP and then transferred to the acceptor end of tRNA(Pro). As ProRS can inadvertently accommodate and process non-cognate amino acids such as alanine and cysteine, to avoid such errors it has two additional distinct editing activities against alanine. One activity is designated as 'pretransfer' editing and involves the tRNA(Pro)-independent hydrolysis of activated Ala-AMP. The other activity is designated 'posttransfer' editing and involves deacylation of mischarged Ala-tRNA(Pro). The misacylated Cys-tRNA(Pro) is not edited by ProRS. The sequence is that of Proline--tRNA ligase from Acinetobacter baumannii (strain AB307-0294).